The following is a 149-amino-acid chain: Arginine repressor (149 aa).

This sequence belongs to the ArgR family.

Its subcellular location is the cytoplasm. It participates in amino-acid biosynthesis; L-arginine biosynthesis [regulation]. Functionally, regulates arginine biosynthesis genes. This is Arginine repressor from Chlorobium phaeobacteroides (strain DSM 266 / SMG 266 / 2430).